The primary structure comprises 400 residues: Ribose-phosphate pyrophosphokinase 2, chloroplastic (400 aa).

Residues 1–44 (MASLALTSPPSVKIPSYLSSSSSSLFSRSSISFRTTESRSRICV) constitute a chloroplast transit peptide. The Mg(2+) site is built by aspartate 214, histidine 216, aspartate 225, and aspartate 229. The binding of phosphoribosylpyrophosphate stretch occupies residues 300–315 (GKVAVMVDDIIDTAGT).

Belongs to the ribose-phosphate pyrophosphokinase family.

It localises to the plastid. Its subcellular location is the chloroplast. The catalysed reaction is D-ribose 5-phosphate + ATP = 5-phospho-alpha-D-ribose 1-diphosphate + AMP + H(+). This Arabidopsis thaliana (Mouse-ear cress) protein is Ribose-phosphate pyrophosphokinase 2, chloroplastic (PRS2).